A 308-amino-acid chain; its full sequence is Protoheme IX farnesyltransferase (308 aa).

Helical transmembrane passes span 20–40 (VLAY…VTAI), 53–73 (PLLI…ANTF), 102–122 (NALV…WWTT), 124–144 (LLSG…YTLL), 149–169 (TSQN…IGWS), 170–190 (AITD…FFWT), 227–249 (LIYT…WLYM), 254–276 (VAGA…GEPV), and 288–308 (YLAV…PTLF).

It belongs to the UbiA prenyltransferase family. Protoheme IX farnesyltransferase subfamily.

It localises to the cell membrane. The catalysed reaction is heme b + (2E,6E)-farnesyl diphosphate + H2O = Fe(II)-heme o + diphosphate. Its pathway is porphyrin-containing compound metabolism; heme O biosynthesis; heme O from protoheme: step 1/1. Converts heme B (protoheme IX) to heme O by substitution of the vinyl group on carbon 2 of heme B porphyrin ring with a hydroxyethyl farnesyl side group. This is Protoheme IX farnesyltransferase from Mycobacterium leprae (strain TN).